Here is a 142-residue protein sequence, read N- to C-terminus: ATP synthase subunit b' (142 aa).

A helical membrane pass occupies residues 7 to 27; that stretch reads TLPLMMFQFFLLVAVLNAVFF.

This sequence belongs to the ATPase B chain family. F-type ATPases have 2 components, F(1) - the catalytic core - and F(0) - the membrane proton channel. F(1) has five subunits: alpha(3), beta(3), gamma(1), delta(1), epsilon(1). F(0) has four main subunits: a(1), b(1), b'(1) and c(10-14). The alpha and beta chains form an alternating ring which encloses part of the gamma chain. F(1) is attached to F(0) by a central stalk formed by the gamma and epsilon chains, while a peripheral stalk is formed by the delta, b and b' chains.

It localises to the cellular thylakoid membrane. Functionally, f(1)F(0) ATP synthase produces ATP from ADP in the presence of a proton or sodium gradient. F-type ATPases consist of two structural domains, F(1) containing the extramembraneous catalytic core and F(0) containing the membrane proton channel, linked together by a central stalk and a peripheral stalk. During catalysis, ATP synthesis in the catalytic domain of F(1) is coupled via a rotary mechanism of the central stalk subunits to proton translocation. Component of the F(0) channel, it forms part of the peripheral stalk, linking F(1) to F(0). The b'-subunit is a diverged and duplicated form of b found in plants and photosynthetic bacteria. This is ATP synthase subunit b' from Acaryochloris marina (strain MBIC 11017).